Here is a 207-residue protein sequence, read N- to C-terminus: ATP synthase subunit a (207 aa).

6 helical membrane-spanning segments follow: residues 3–23 (QHVI…TIFA), 62–82 (LIAS…IPGL), 88–108 (NLNT…FEGI), 119–139 (FLGP…LSHL), 158–178 (LISV…VMLI), and 180–200 (LIAV…YIAG).

It belongs to the ATPase A chain family. As to quaternary structure, F-type ATPases have 2 components, CF(1) - the catalytic core - and CF(0) - the membrane proton channel. CF(1) has five subunits: alpha(3), beta(3), gamma(1), delta(1), epsilon(1). CF(0) has three main subunits: a(1), b(2) and c(9-12). The alpha and beta chains form an alternating ring which encloses part of the gamma chain. CF(1) is attached to CF(0) by a central stalk formed by the gamma and epsilon chains, while a peripheral stalk is formed by the delta and b chains.

The protein resides in the cell inner membrane. Functionally, key component of the proton channel; it plays a direct role in the translocation of protons across the membrane. This is ATP synthase subunit a from Sulfurihydrogenibium sp. (strain YO3AOP1).